Reading from the N-terminus, the 289-residue chain is YLVSPAAYAALGAYMFLLILIGFPVNFLTLYVTLEHKKLRTPLNYILLNLAVADLFMVLGGFTTTMYTSMHGYFVLGRLGCNLEGFFATLGGEIALWSLVVLAIERWIVVCKPISKFRFTEDNAIMGLAFSWVMALACAVPPLVGWLRYIPEGMQCTCGVDYYTRAEGFDNESFVIYMFIVHFLIPLSVIFFCYGRLLCAVKEAAAAQQESETTQRAEKEVSRMVVIMVIGFLVCWLPYASVAWWIFCNQGSDFGPIFMTLPSFFAKRPAIYNPMIYICMNKQFRHCMI.

Residues 1–7 (YLVSPAA) lie on the Extracellular side of the membrane. A helical membrane pass occupies residues 8–32 (YAALGAYMFLLILIGFPVNFLTLYV). The Cytoplasmic segment spans residues 33-44 (TLEHKKLRTPLN). Residues 45-67 (YILLNLAVADLFMVLGGFTTTMY) traverse the membrane as a helical segment. The Extracellular portion of the chain corresponds to 68–81 (TSMHGYFVLGRLGC). A disulfide bridge links C81 with C158. Residues 82–104 (NLEGFFATLGGEIALWSLVVLAI) traverse the membrane as a helical segment. The short motif at 105–107 (ERW) is the 'Ionic lock' involved in activated form stabilization element. Residues 105–123 (ERWIVVCKPISKFRFTEDN) are Cytoplasmic-facing. A helical membrane pass occupies residues 124–144 (AIMGLAFSWVMALACAVPPLV). Residues 145 to 173 (GWLRYIPEGMQCTCGVDYYTRAEGFDNES) lie on the Extracellular side of the membrane. Residue N171 is glycosylated (N-linked (GlcNAc...) asparagine). A helical transmembrane segment spans residues 174–195 (FVIYMFIVHFLIPLSVIFFCYG). The Cytoplasmic portion of the chain corresponds to 196–223 (RLLCAVKEAAAAQQESETTQRAEKEVSR). Residues 224–245 (MVVIMVIGFLVCWLPYASVAWW) form a helical membrane-spanning segment. Over 246–257 (IFCNQGSDFGPI) the chain is Extracellular. A helical membrane pass occupies residues 258–279 (FMTLPSFFAKRPAIYNPMIYIC). Residue K267 is modified to N6-(retinylidene)lysine. The Cytoplasmic segment spans residues 280-289 (MNKQFRHCMI).

The protein belongs to the G-protein coupled receptor 1 family. Opsin subfamily. In terms of processing, phosphorylated on some or all of the serine and threonine residues present in the C-terminal region. Post-translationally, contains one covalently linked retinal chromophore.

The protein localises to the membrane. It localises to the cell projection. The protein resides in the cilium. Its subcellular location is the photoreceptor outer segment. Functionally, photoreceptor required for image-forming vision at low light intensity. While most salt water fish species use retinal as chromophore, most freshwater fish use 3-dehydroretinal, or a mixture of retinal and 3-dehydroretinal. Light-induced isomerization of 11-cis to all-trans retinal triggers a conformational change that activates signaling via G-proteins. Subsequent receptor phosphorylation mediates displacement of the bound G-protein alpha subunit by arrestin and terminates signaling. This chain is Rhodopsin (rho), found in Batrachocottus nikolskii (Fat sculpin).